Here is a 361-residue protein sequence, read N- to C-terminus: Putative agmatine deiminase (361 aa).

Cysteine 354 acts as the Amidino-cysteine intermediate in catalysis.

This sequence belongs to the agmatine deiminase family.

The enzyme catalyses agmatine + H2O = N-carbamoylputrescine + NH4(+). In Streptococcus pneumoniae (strain Hungary19A-6), this protein is Putative agmatine deiminase.